The following is a 404-amino-acid chain: Argininosuccinate synthase (404 aa).

ATP is bound by residues 10-18 (AYSGGLDTS) and alanine 37. L-citrulline contacts are provided by tyrosine 90 and serine 95. Glycine 120 contacts ATP. Residues threonine 122, asparagine 126, and aspartate 127 each contribute to the L-aspartate site. An L-citrulline-binding site is contributed by asparagine 126. The L-citrulline site is built by arginine 130, serine 180, serine 189, glutamate 265, and tyrosine 277.

This sequence belongs to the argininosuccinate synthase family. Type 1 subfamily. As to quaternary structure, homotetramer.

It localises to the cytoplasm. It carries out the reaction L-citrulline + L-aspartate + ATP = 2-(N(omega)-L-arginino)succinate + AMP + diphosphate + H(+). Its pathway is amino-acid biosynthesis; L-arginine biosynthesis; L-arginine from L-ornithine and carbamoyl phosphate: step 2/3. The sequence is that of Argininosuccinate synthase from Helicobacter hepaticus (strain ATCC 51449 / 3B1).